An 828-amino-acid polypeptide reads, in one-letter code: Chitin synthase 7 (828 aa).

Helical transmembrane passes span 17–37 (VIVGLVMLAAVLEWFLWVAAF), 57–77 (AVVVAILFVGFRAVFLPIMVV), 95–115 (VGLQWFAFWAFAGLLTIPWLF), 444–464 (FMQNTIRTTALLFFIMVLAIL), 473–493 (LPVGFIAISLGLNWLMMIYFG), and 501–521 (IWLYPLMFVLNPFFNWWYMVY). The N-linked (GlcNAc...) asparagine glycan is linked to N615. 2 stretches are compositionally biased toward low complexity: residues 740-752 (SLVSLGSSASNSN) and 813-822 (SNNDPNNSNS). Disordered stretches follow at residues 740 to 780 (SLVS…LGRA) and 793 to 828 (LEIGTSHGSSANRPALSRQASNNDPNNSNSGGHQQR). An N-linked (GlcNAc...) asparagine glycan is attached at N818.

Belongs to the chitin synthase family. Class VII subfamily.

Its subcellular location is the membrane. It carries out the reaction [(1-&gt;4)-N-acetyl-beta-D-glucosaminyl](n) + UDP-N-acetyl-alpha-D-glucosamine = [(1-&gt;4)-N-acetyl-beta-D-glucosaminyl](n+1) + UDP + H(+). In terms of biological role, polymerizes chitin, a structural polymer of the cell wall and septum, by transferring the sugar moiety of UDP-GlcNAc to the non-reducing end of the growing chitin polymer. Required for normal appressorial chitin content and for the normal formation and function of these infection structures. The chain is Chitin synthase 7 from Pyricularia oryzae (strain 70-15 / ATCC MYA-4617 / FGSC 8958) (Rice blast fungus).